Reading from the N-terminus, the 119-residue chain is uncharacterized protein (119 aa).

Positions 1-30 (MCPECFFLMLCFCGYCSSSSSSFRSSPVYG) are cleaved as a signal peptide.

This is an uncharacterized protein from Escherichia coli (strain UTI89 / UPEC).